The sequence spans 341 residues: 5-formaminoimidazole-4-carboxamide-1-(beta)-D-ribofuranosyl 5'-monophosphate synthetase (341 aa).

5-amino-1-(5-phospho-beta-D-ribosyl)imidazole-4-carboxamide-binding residues include H10 and T77. Residues 106–317 (DRSLKERLMR…YYGLLFDEPI (212 aa)) form the ATP-grasp domain. Residues 132-188 (DTLV…VLAY) and E210 each bind ATP. N238 is a binding site for 5-amino-1-(5-phospho-beta-D-ribosyl)imidazole-4-carboxamide. 2 residues coordinate Mg(2+): E277 and E290.

It belongs to the phosphohexose mutase family. Mg(2+) serves as cofactor. It depends on Mn(2+) as a cofactor.

It carries out the reaction 5-amino-1-(5-phospho-beta-D-ribosyl)imidazole-4-carboxamide + formate + ATP = 5-formamido-1-(5-phospho-D-ribosyl)imidazole-4-carboxamide + ADP + phosphate. The protein operates within purine metabolism; IMP biosynthesis via de novo pathway; 5-formamido-1-(5-phospho-D-ribosyl)imidazole-4-carboxamide from 5-amino-1-(5-phospho-D-ribosyl)imidazole-4-carboxamide (formate route): step 1/1. Its function is as follows. Catalyzes the ATP- and formate-dependent formylation of 5-aminoimidazole-4-carboxamide-1-beta-d-ribofuranosyl 5'-monophosphate (AICAR) to 5-formaminoimidazole-4-carboxamide-1-beta-d-ribofuranosyl 5'-monophosphate (FAICAR) in the absence of folates. The sequence is that of 5-formaminoimidazole-4-carboxamide-1-(beta)-D-ribofuranosyl 5'-monophosphate synthetase from Cenarchaeum symbiosum (strain A).